Here is a 1076-residue protein sequence, read N- to C-terminus: Bifunctional glutamine synthetase adenylyltransferase/adenylyl-removing enzyme (1076 aa).

The tract at residues 1 to 521 is adenylyl removase; it reads MESSMFKPSS…LHLDIYYRPM (521 aa). Residues 524–1076 are adenylyl transferase; the sequence is VNAQMENDQI…LERNRRRAQR (553 aa). Over residues 1041-1056 the composition is skewed to low complexity; it reads ATATASAATPQPQTAP. Residues 1041–1076 form a disordered region; sequence ATATASAATPQPQTAPRPRMHVIAPRLERNRRRAQR.

Belongs to the GlnE family. The cofactor is Mg(2+).

The enzyme catalyses [glutamine synthetase]-O(4)-(5'-adenylyl)-L-tyrosine + phosphate = [glutamine synthetase]-L-tyrosine + ADP. It carries out the reaction [glutamine synthetase]-L-tyrosine + ATP = [glutamine synthetase]-O(4)-(5'-adenylyl)-L-tyrosine + diphosphate. In terms of biological role, involved in the regulation of glutamine synthetase GlnA, a key enzyme in the process to assimilate ammonia. When cellular nitrogen levels are high, the C-terminal adenylyl transferase (AT) inactivates GlnA by covalent transfer of an adenylyl group from ATP to specific tyrosine residue of GlnA, thus reducing its activity. Conversely, when nitrogen levels are low, the N-terminal adenylyl removase (AR) activates GlnA by removing the adenylyl group by phosphorolysis, increasing its activity. The regulatory region of GlnE binds the signal transduction protein PII (GlnB) which indicates the nitrogen status of the cell. In Bifidobacterium longum subsp. infantis (strain ATCC 15697 / DSM 20088 / JCM 1222 / NCTC 11817 / S12), this protein is Bifunctional glutamine synthetase adenylyltransferase/adenylyl-removing enzyme.